A 519-amino-acid polypeptide reads, in one-letter code: Probable DNA ligase (519 aa).

ATP is bound at residue Glu-211. Catalysis depends on Lys-213, which acts as the N6-AMP-lysine intermediate. Residues Arg-218, Arg-233, Glu-262, Phe-302, Arg-374, and Lys-380 each contribute to the ATP site.

Belongs to the ATP-dependent DNA ligase family. Mg(2+) is required as a cofactor.

The catalysed reaction is ATP + (deoxyribonucleotide)n-3'-hydroxyl + 5'-phospho-(deoxyribonucleotide)m = (deoxyribonucleotide)n+m + AMP + diphosphate.. Functionally, DNA ligase that seals nicks in double-stranded DNA during DNA replication, DNA recombination and DNA repair. The sequence is that of Probable DNA ligase from Anaeromyxobacter sp. (strain Fw109-5).